Reading from the N-terminus, the 858-residue chain is DNA mismatch repair protein MutS (858 aa).

613–620 (GPNMAGKS) contributes to the ATP binding site.

This sequence belongs to the DNA mismatch repair MutS family.

In terms of biological role, this protein is involved in the repair of mismatches in DNA. It is possible that it carries out the mismatch recognition step. This protein has a weak ATPase activity. This chain is DNA mismatch repair protein MutS, found in Dehalococcoides mccartyi (strain CBDB1).